The chain runs to 348 residues: uncharacterized protein (348 aa).

The protein belongs to the Mu gp47/PBSX XkdT family.

This is an uncharacterized protein from Bacillus subtilis (strain 168).